The sequence spans 129 residues: Small ribosomal subunit protein uS11 (129 aa).

Belongs to the universal ribosomal protein uS11 family. As to quaternary structure, part of the 30S ribosomal subunit. Interacts with proteins S7 and S18. Binds to IF-3.

Functionally, located on the platform of the 30S subunit, it bridges several disparate RNA helices of the 16S rRNA. Forms part of the Shine-Dalgarno cleft in the 70S ribosome. The chain is Small ribosomal subunit protein uS11 from Levilactobacillus brevis (strain ATCC 367 / BCRC 12310 / CIP 105137 / JCM 1170 / LMG 11437 / NCIMB 947 / NCTC 947) (Lactobacillus brevis).